The following is a 368-amino-acid chain: MNDETTPANKNPEKAELRCGWTTGACATAATKAALTALITGEFPDPVGIILPKGEVPYFQLAYEGLGEGYAMAGIVKDAGDDPDVTHGATIISTVYPAPPGTGIIFRAGEGVGTVTREGLAIPPGEAAINPVPRRMMTEICEAICAEYGLPADLVITISVPGGEEIAQKTWNPRLGIIGGISILGTTGVVHPFSCSAWIHSIHRGIDVARAAGQKHVLGATGSTSEDAAQALYNLPDFAILDMGDFAGGVLKYLREHPIDRLTIAGGFAKLTKLAQGALDLHSSRSQVDKGFLWQIAERAGAPADMKERILLANTAMEVLELTQSIGIDIAGPIALEARQTALKTLRGAPVEVEIIVTDRKGNILARV.

The protein belongs to the CbiD family.

It catalyses the reaction Co-precorrin-5B + S-adenosyl-L-methionine = Co-precorrin-6A + S-adenosyl-L-homocysteine. It participates in cofactor biosynthesis; adenosylcobalamin biosynthesis; cob(II)yrinate a,c-diamide from sirohydrochlorin (anaerobic route): step 6/10. Functionally, catalyzes the methylation of C-1 in cobalt-precorrin-5B to form cobalt-precorrin-6A. The protein is Cobalt-precorrin-5B C(1)-methyltransferase of Brucella canis (strain ATCC 23365 / NCTC 10854 / RM-666).